Here is a 196-residue protein sequence, read N- to C-terminus: MRSAVQWRLCWENDLQLTDHVELSDFFRKIYGRIGSFDAKPFEGGRSWAGARPEVRLIASDAQGIAAHVGILRRFIKVGEVDFLVAELGLYGVRPDLEKLGISFSMRMVHPVLQQLAVPFAFGTVRHAMRSHVERFCREGIAAIVPGVKVRSSRANVHHDLPSTRLEDVIVLVSPIGRSIDEWPPGDVIDRNGSEL.

It belongs to the NodA family.

It localises to the cytoplasm. In terms of biological role, N-acyltransferase required for nodulation. Acts in the production of a small, heat-stable compound (Nod) that stimulates mitosis in various plant protoplasts. This Mesorhizobium sp. (strain 7653R) protein is Nodulation protein A.